Here is a 98-residue protein sequence, read N- to C-terminus: NADH-ubiquinone oxidoreductase chain 4L (98 aa).

The next 3 membrane-spanning stretches (helical) occupy residues 1 to 21, 29 to 49, and 61 to 81; these read MPVV…GLLV, SLLC…VTVL, and IILL…LVMV.

This sequence belongs to the complex I subunit 4L family. In terms of assembly, core subunit of respiratory chain NADH dehydrogenase (Complex I) which is composed of 45 different subunits.

The protein localises to the mitochondrion inner membrane. The enzyme catalyses a ubiquinone + NADH + 5 H(+)(in) = a ubiquinol + NAD(+) + 4 H(+)(out). In terms of biological role, core subunit of the mitochondrial membrane respiratory chain NADH dehydrogenase (Complex I) which catalyzes electron transfer from NADH through the respiratory chain, using ubiquinone as an electron acceptor. Part of the enzyme membrane arm which is embedded in the lipid bilayer and involved in proton translocation. This chain is NADH-ubiquinone oxidoreductase chain 4L (MT-ND4L), found in Ursus arctos (Brown bear).